The following is a 313-amino-acid chain: D-alanine--D-alanine ligase (313 aa).

One can recognise an ATP-grasp domain in the interval 108–308 (KLVWQQLGIP…YQELVVKVLA (201 aa)). Position 138–193 (138–193 (VAKLGLPLFVKPASEGSSVAVIKVKTADALVPALEEAVKFDKIVVVEKSIEGGGEY)) interacts with ATP. Residues D262, E275, and N277 each coordinate Mg(2+).

Belongs to the D-alanine--D-alanine ligase family. Requires Mg(2+) as cofactor. It depends on Mn(2+) as a cofactor.

The protein localises to the cytoplasm. It catalyses the reaction 2 D-alanine + ATP = D-alanyl-D-alanine + ADP + phosphate + H(+). Its pathway is cell wall biogenesis; peptidoglycan biosynthesis. Its function is as follows. Cell wall formation. This chain is D-alanine--D-alanine ligase, found in Paraburkholderia phymatum (strain DSM 17167 / CIP 108236 / LMG 21445 / STM815) (Burkholderia phymatum).